The sequence spans 468 residues: Transmembrane protein 151A (468 aa).

Residues 1–20 (MPEGEGGDCGEVPALVPDGE) are disordered. Helical transmembrane passes span 45 to 65 (CLLL…CRLA) and 98 to 118 (YLYI…AECW). The tract at residues 384-438 (VSSNSLPPARPSGPRLPFSRSRLSLGAGGRTTPGVFRSLSGGPLGRRGEDTEPLE) is disordered.

Belongs to the TMEM151 family. As to expression, highly expressed in the central nervous system (CNS) including the cerebral cortex, hippocampus, spinal cord, brainstem, and thalamus. Expression is relatively low during postnatal stages but highly expressed at postnatal day 14 (P14), and declined in adulthood. Also expressed in the stomach, heart, liver, spleen, lung, kidney, and muscle.

Its subcellular location is the endoplasmic reticulum membrane. The protein resides in the cell projection. It localises to the axon. It is found in the dendrite. The protein is Transmembrane protein 151A (Tmem151a) of Mus musculus (Mouse).